A 251-amino-acid chain; its full sequence is Membrane-anchored junction protein (251 aa).

Residues 1–227 are Nuclear-facing; it reads MSLKPFTYPF…HSNPPPLKEP (227 aa). The interval 140–225 is disordered; sequence RKRKLMEEPS…LEHSNPPPLK (86 aa). Residues 183 to 198 are compositionally biased toward polar residues; the sequence is EDSQQDTPASDSTAVT. The chain crosses the membrane as a helical span at residues 228 to 246; it reads AARGFLGFLSALFPFRYFF. Over 247 to 251 the chain is Perinuclear space; sequence RKSTQ.

Belongs to the MAJIN family. In terms of assembly, component of the MAJIN-TERB1-TERB2 complex, composed of MAJIN, TERB1 and TERB2.

It is found in the nucleus inner membrane. The protein localises to the chromosome. The protein resides in the telomere. Functionally, meiosis-specific telomere-associated protein involved in meiotic telomere attachment to the nucleus inner membrane, a crucial step for homologous pairing and synapsis. Component of the MAJIN-TERB1-TERB2 complex, which promotes telomere cap exchange by mediating attachment of telomeric DNA to the inner nuclear membrane and replacement of the protective cap of telomeric chromosomes: in early meiosis, the MAJIN-TERB1-TERB2 complex associates with telomeric DNA and the shelterin/telosome complex. During prophase, the complex matures and promotes release of the shelterin/telosome complex from telomeric DNA. In the complex, MAJIN acts as the anchoring subunit to the nucleus inner membrane. MAJIN shows DNA-binding activity, possibly for the stabilization of telomere attachment on the nucleus inner membrane. The protein is Membrane-anchored junction protein of Rattus norvegicus (Rat).